Here is a 137-residue protein sequence, read N- to C-terminus: Large ribosomal subunit protein uL16 (137 aa).

It belongs to the universal ribosomal protein uL16 family. In terms of assembly, part of the 50S ribosomal subunit.

Functionally, binds 23S rRNA and is also seen to make contacts with the A and possibly P site tRNAs. The chain is Large ribosomal subunit protein uL16 from Pseudomonas aeruginosa (strain LESB58).